A 799-amino-acid chain; its full sequence is Oxygen sensor protein DosP (799 aa).

One can recognise a PAS 1 domain in the interval 10–81 (ADGIFFPALE…YIRHNREGGK (72 aa)). 2 residues coordinate heme: His69 and Met87. Positions 134 to 207 (QTRQLIIAVD…LQQLLWKTAR (74 aa)) constitute a PAS 2 domain. Positions 208-260 (DQDEFLLLTRTGEKIWIKASISPVYDVLAHLQNLVMTFSDITEERQIRQLEGN) constitute a PAC domain. The 131-residue stretch at 402–532 (VSPVVYLIGV…GGNGWQFFSP (131 aa)) folds into the GGDEF domain. The 255-residue stretch at 541 to 795 (RLVLGAALKE…EIPGWMSSVL (255 aa)) folds into the EAL domain.

Homodimer; has been previously suggested to be a homotetramer based on size exclusion chromatography. Forms a complex with DosC. Heme is required as a cofactor. Mg(2+) serves as cofactor. The heme distal ligand is coordinated by Met-87 in the active Fe(2+) (ferrous) form, by O(2) in the O(2)-bound form and by H(2)O in the inactive Fe(3+) (ferric) form.

It catalyses the reaction 3',3'-c-di-GMP + H2O = 5'-phosphoguanylyl(3'-&gt;5')guanosine + H(+). Has c-di-GMP PDE activity in both Fe(2+) and Fe(3+)-bound forms; this activity is increased 6-7 fold by binding of O(2) and CO and NO. Has cAMP PDE activity only when the heme is in the Fe(2+) form. cAMP PDE activity is inhibited by oxidation of the heme iron and by binding of external ligands such as CO and NO. Also strongly inhibited by etazolate hydrochloride, a selective cAMP PDE inhibitor. PDE activity is inhibited in the absence of oxygen. Heme-based oxygen sensor protein displaying phosphodiesterase (PDE) activity toward c-di-GMP in response to oxygen availability. Involved in the modulation of intracellular c-di-GMP levels, in association with DosC which catalyzes the biosynthesis of c-di-GMP (diguanylate cyclase activity). Cyclic-di-GMP is a second messenger which controls cell surface-associated traits in bacteria. Has very poor PDE activity on cAMP but is not active with cGMP, bis(p-nitrophenyl) phosphate or p-nitrophenyl phosphate. Via its PDE activity on c-di-GMP, DosP regulates biofilm formation through the repression of transcription of the csgBAC operon, which encodes curli structural subunits. This is Oxygen sensor protein DosP (dosP) from Escherichia coli (strain K12).